Consider the following 297-residue polypeptide: Tyrosine recombinase XerD (297 aa).

Positions 1 to 86 constitute a Core-binding (CB) domain; it reads MNDLIEDFLH…SLRSFFHYLM (86 aa). Positions 107–291 constitute a Tyr recombinase domain; that stretch reads GLPKVLNLDD…TKLRLKDVYK (185 aa). Residues Arg-147, Lys-171, His-243, Arg-246, and His-269 contribute to the active site. Catalysis depends on Tyr-278, which acts as the O-(3'-phospho-DNA)-tyrosine intermediate.

It belongs to the 'phage' integrase family. XerD subfamily. In terms of assembly, forms a cyclic heterotetrameric complex composed of two molecules of XerC and two molecules of XerD.

The protein resides in the cytoplasm. Site-specific tyrosine recombinase, which acts by catalyzing the cutting and rejoining of the recombining DNA molecules. The XerC-XerD complex is essential to convert dimers of the bacterial chromosome into monomers to permit their segregation at cell division. It also contributes to the segregational stability of plasmids. In Listeria monocytogenes serotype 4b (strain F2365), this protein is Tyrosine recombinase XerD.